The primary structure comprises 309 residues: Ribonuclease Z (309 aa).

Residues H63, H65, D67, H68, H143, D213, and H271 each contribute to the Zn(2+) site. D67 acts as the Proton acceptor in catalysis.

This sequence belongs to the RNase Z family. As to quaternary structure, homodimer. The cofactor is Zn(2+).

It carries out the reaction Endonucleolytic cleavage of RNA, removing extra 3' nucleotides from tRNA precursor, generating 3' termini of tRNAs. A 3'-hydroxy group is left at the tRNA terminus and a 5'-phosphoryl group is left at the trailer molecule.. Functionally, zinc phosphodiesterase, which displays some tRNA 3'-processing endonuclease activity. Probably involved in tRNA maturation, by removing a 3'-trailer from precursor tRNA. This chain is Ribonuclease Z, found in Phocaeicola vulgatus (strain ATCC 8482 / DSM 1447 / JCM 5826 / CCUG 4940 / NBRC 14291 / NCTC 11154) (Bacteroides vulgatus).